A 541-amino-acid chain; its full sequence is MAFEELLSQVGGLGRFQMLHLVFILPSLMLLIPHILLENFAAAIPGHRCWVHMLDNNTGSGNETGILSEDALLRISIPLDSNLRPEKCRRFVHPQWQLLHLNGTIHSTSEADTEPCVDGWVYDQSYFPSTIVTKWDLVCDYQSLKSVVQFLLLTGMLVGGIIGGHVSDRFGRRFILRWCLLQLAITDTCAAFAPTFPVYCVLRFLAGFSSMIIISNNSLPITEWIRPNSKALVVILSSGALSIGQIILGGLAYVFRDWQTLHVVASVPFFVFFLLSRWLVESARWLIITNKLDEGLKALRKVARTNGIKNAEETLNIEVVRSTMQEELDAAQTKTTVCDLFRNPSMRKRICILVFLRFANTIPFYGTMVNLQHVGSNIFLLQVLYGAVALIVRCLALLTLNHMGRRISQILFMFLVGLSILANTFVPKEMQTLRVALACLGIGCSAATFSSVAVHFIELIPTVLRARASGIDLTASRIGAALAPLLMTLTVFFTTLPWIIYGIFPIIGGLIVFLLPETKNLPLPDTIKDVENQKKNLKEKA.

At 1 to 15 the chain is on the cytoplasmic side; sequence MAFEELLSQVGGLGR. The chain crosses the membrane as a helical span at residues 16 to 36; it reads FQMLHLVFILPSLMLLIPHIL. Topologically, residues 37-145 are extracellular; sequence LENFAAAIPG…DLVCDYQSLK (109 aa). 2 N-linked (GlcNAc...) asparagine glycosylation sites follow: Asn56 and Asn102. A helical transmembrane segment spans residues 146–166; the sequence is SVVQFLLLTGMLVGGIIGGHV. Residues 167–193 are Cytoplasmic-facing; that stretch reads SDRFGRRFILRWCLLQLAITDTCAAFA. Residues 194–214 traverse the membrane as a helical segment; the sequence is PTFPVYCVLRFLAGFSSMIII. Over 215–230 the chain is Extracellular; that stretch reads SNNSLPITEWIRPNSK. Residues 231–251 form a helical membrane-spanning segment; the sequence is ALVVILSSGALSIGQIILGGL. At 252–259 the chain is on the cytoplasmic side; sequence AYVFRDWQ. A helical transmembrane segment spans residues 260 to 280; the sequence is TLHVVASVPFFVFFLLSRWLV. Residues 281–349 lie on the Extracellular side of the membrane; the sequence is ESARWLIITN…LFRNPSMRKR (69 aa). Residues 350–370 traverse the membrane as a helical segment; it reads ICILVFLRFANTIPFYGTMVN. Residues 371 to 377 lie on the Cytoplasmic side of the membrane; that stretch reads LQHVGSN. The helical transmembrane segment at 378–398 threads the bilayer; that stretch reads IFLLQVLYGAVALIVRCLALL. The Extracellular segment spans residues 399–406; that stretch reads TLNHMGRR. A helical membrane pass occupies residues 407–427; that stretch reads ISQILFMFLVGLSILANTFVP. Topologically, residues 428–436 are cytoplasmic; sequence KEMQTLRVA. A helical membrane pass occupies residues 437-457; it reads LACLGIGCSAATFSSVAVHFI. The Extracellular portion of the chain corresponds to 458-472; sequence ELIPTVLRARASGID. Residues 473–493 traverse the membrane as a helical segment; the sequence is LTASRIGAALAPLLMTLTVFF. At 494 to 495 the chain is on the cytoplasmic side; it reads TT. The chain crosses the membrane as a helical span at residues 496–516; it reads LPWIIYGIFPIIGGLIVFLLP. Topologically, residues 517–541 are extracellular; sequence ETKNLPLPDTIKDVENQKKNLKEKA.

The protein belongs to the major facilitator (TC 2.A.1) superfamily. Organic cation transporter (TC 2.A.1.19) family. Detected in fetal and adult liver, and in adult kidney.

Its subcellular location is the membrane. In Homo sapiens (Human), this protein is Solute carrier family 22 member 10 (SLC22A10).